We begin with the raw amino-acid sequence, 292 residues long: MFNRIFLFLLTNVAVLMLAGVVMSVLGVNPAQMSGLLVMAAIFGFGGSFISLLLSKFMAKRSTGAQVITEPRTPTERWLLETVRRQAQAAGIGMPEVAVYDGPEINAFATGANRNNALVAVSTGLLQHMDQDEAEAVLGHEIAHVANGDMVTMALLQGVLNTFVIVLARVVGGIIDSAVSGNRDSGRGFAYYIIVFVLEMVFGMFATMIAMWFSRRREFRADAGGAQLAGRSKMIAALERLSLNHGQNTLPSQVQAFGISGGVGDGLRRLFLSHPPLTERIAALRAANGTAM.

The next 2 membrane-spanning stretches (helical) occupy residues 5-25 and 34-54; these read IFLF…VMSV and SGLL…SLLL. Residue H140 participates in Zn(2+) binding. E141 is a catalytic residue. Zn(2+) is bound at residue H144. 2 helical membrane passes run 155–175 and 193–213; these read LLQG…GGII and IIVF…AMWF. E218 serves as a coordination point for Zn(2+).

It belongs to the peptidase M48B family. It depends on Zn(2+) as a cofactor.

It localises to the cell inner membrane. The polypeptide is Protease HtpX (Xanthomonas oryzae pv. oryzae (strain MAFF 311018)).